Reading from the N-terminus, the 213-residue chain is Thiamine-phosphate synthase (213 aa).

Residues 40 to 44 (QFREK) and N75 each bind 4-amino-2-methyl-5-(diphosphooxymethyl)pyrimidine. D76 and D95 together coordinate Mg(2+). S113 serves as a coordination point for 4-amino-2-methyl-5-(diphosphooxymethyl)pyrimidine. 139-141 (TPS) contacts 2-[(2R,5Z)-2-carboxy-4-methylthiazol-5(2H)-ylidene]ethyl phosphate. Residue K142 participates in 4-amino-2-methyl-5-(diphosphooxymethyl)pyrimidine binding. 2-[(2R,5Z)-2-carboxy-4-methylthiazol-5(2H)-ylidene]ethyl phosphate contacts are provided by residues G171 and 191–192 (IS).

This sequence belongs to the thiamine-phosphate synthase family. Requires Mg(2+) as cofactor.

The enzyme catalyses 2-[(2R,5Z)-2-carboxy-4-methylthiazol-5(2H)-ylidene]ethyl phosphate + 4-amino-2-methyl-5-(diphosphooxymethyl)pyrimidine + 2 H(+) = thiamine phosphate + CO2 + diphosphate. The catalysed reaction is 2-(2-carboxy-4-methylthiazol-5-yl)ethyl phosphate + 4-amino-2-methyl-5-(diphosphooxymethyl)pyrimidine + 2 H(+) = thiamine phosphate + CO2 + diphosphate. It carries out the reaction 4-methyl-5-(2-phosphooxyethyl)-thiazole + 4-amino-2-methyl-5-(diphosphooxymethyl)pyrimidine + H(+) = thiamine phosphate + diphosphate. It functions in the pathway cofactor biosynthesis; thiamine diphosphate biosynthesis; thiamine phosphate from 4-amino-2-methyl-5-diphosphomethylpyrimidine and 4-methyl-5-(2-phosphoethyl)-thiazole: step 1/1. Its function is as follows. Condenses 4-methyl-5-(beta-hydroxyethyl)thiazole monophosphate (THZ-P) and 2-methyl-4-amino-5-hydroxymethyl pyrimidine pyrophosphate (HMP-PP) to form thiamine monophosphate (TMP). This chain is Thiamine-phosphate synthase, found in Staphylococcus aureus (strain MSSA476).